Here is a 691-residue protein sequence, read N- to C-terminus: Probable serine/threonine-protein kinase pXi (691 aa).

The 246-residue stretch at 18-263 folds into the Protein kinase domain; that stretch reads YEIGSQIGNG…IDQTLKHPWI (246 aa). Residues 24–32 and K47 contribute to the ATP site; that span reads IGNGKFAQV. The active-site Proton acceptor is the D137. 4 disordered regions span residues 314 to 350, 420 to 447, 510 to 536, and 600 to 620; these read TPIKSNDENNNNNNNNNNNNNNNEILDKKSNENENEN, ENDSSSSETYSSSSPIENGGGGGDKFTS, QHNNNINNNNNNINNGGSTSINNGNGT, and GGSGCSSSSDESTGGSFKKDK. Low complexity predominate over residues 322 to 336; the sequence is NNNNNNNNNNNNNNN. The segment covering 338–350 has biased composition (basic and acidic residues); that stretch reads ILDKKSNENENEN. Composition is skewed to low complexity over residues 423–433, 512–536, and 600–615; these read SSSSETYSSSS, NNNINNNNNNINNGGSTSINNGNGT, and GGSGCSSSSDESTGGS. Residues 642-691 are a coiled coil; that stretch reads PKETMDKLASVLSNYKQKNQEKSLKVKYEKQKDKYKKLKSQLKKDKSLLK.

Belongs to the protein kinase superfamily. CAMK Ser/Thr protein kinase family.

It carries out the reaction L-seryl-[protein] + ATP = O-phospho-L-seryl-[protein] + ADP + H(+). The enzyme catalyses L-threonyl-[protein] + ATP = O-phospho-L-threonyl-[protein] + ADP + H(+). This Dictyostelium discoideum (Social amoeba) protein is Probable serine/threonine-protein kinase pXi (pXi).